The chain runs to 98 residues: Large ribosomal subunit protein eL21 (98 aa).

The interval 1 to 24 (MVKMSHGPRSGSRRKLTKSAEERK) is disordered.

The protein belongs to the eukaryotic ribosomal protein eL21 family.

The protein is Large ribosomal subunit protein eL21 (rpl21e) of Thermoplasma acidophilum (strain ATCC 25905 / DSM 1728 / JCM 9062 / NBRC 15155 / AMRC-C165).